We begin with the raw amino-acid sequence, 898 residues long: Alanine--tRNA ligase (898 aa).

Zn(2+) is bound by residues His-584, His-588, Cys-686, and His-690.

The protein belongs to the class-II aminoacyl-tRNA synthetase family. Zn(2+) is required as a cofactor.

It localises to the cytoplasm. It carries out the reaction tRNA(Ala) + L-alanine + ATP = L-alanyl-tRNA(Ala) + AMP + diphosphate. In terms of biological role, catalyzes the attachment of alanine to tRNA(Ala) in a two-step reaction: alanine is first activated by ATP to form Ala-AMP and then transferred to the acceptor end of tRNA(Ala). Also edits incorrectly charged Ser-tRNA(Ala) and Gly-tRNA(Ala) via its editing domain. This Myxococcus xanthus (strain DK1622) protein is Alanine--tRNA ligase.